The sequence spans 503 residues: Cardiolipin synthase (503 aa).

3 helical membrane-spanning segments follow: residues 5-25, 30-50, and 59-79; these read LNVL…RGFL, VGTL…IIFF, and LTWL…YLMF. PLD phosphodiesterase domains are found at residues 238–265 and 416–443; these read INYR…GDEY and NRGF…DMRS. Catalysis depends on residues histidine 243, lysine 245, aspartate 250, histidine 421, lysine 423, and aspartate 428.

The protein belongs to the phospholipase D family. Cardiolipin synthase subfamily.

The protein localises to the cell membrane. The enzyme catalyses 2 a 1,2-diacyl-sn-glycero-3-phospho-(1'-sn-glycerol) = a cardiolipin + glycerol. Catalyzes the reversible phosphatidyl group transfer from one phosphatidylglycerol molecule to another to form cardiolipin (CL) (diphosphatidylglycerol) and glycerol. This Alkalihalophilus pseudofirmus (strain ATCC BAA-2126 / JCM 17055 / OF4) (Bacillus pseudofirmus) protein is Cardiolipin synthase (cls).